The primary structure comprises 81 residues: Probable antimicrobial peptide Con13 (81 aa).

A signal peptide spans 1–22 (MNRKLLLVFLVVAMLVMQPAEA). Positions 66–81 (EAGQIPFDEFMDVLYS) are excised as a propeptide.

Belongs to the non-disulfide-bridged peptide (NDBP) superfamily. Long chain multifunctional peptide (group 2) family. In terms of tissue distribution, expressed by the venom gland.

It localises to the secreted. Its subcellular location is the target cell membrane. In terms of biological role, at high concentrations, acts as a pore former in cellular membranes and causes the leakage of the cells. At submicromolar concentrations, degranulates granulocytes and has a weak hemolytic activity against human erythrocytes. Also strongly inhibits the production of superoxide anions. Has a strong antibacterial activity against Gram-negative bacteria but is less active against Gram-positive bacteria. Also has antifungal activity. This Opisthacanthus cayaporum (South American scorpion) protein is Probable antimicrobial peptide Con13.